The following is a 109-amino-acid chain: Large ribosomal subunit protein uL22 (109 aa).

It belongs to the universal ribosomal protein uL22 family. As to quaternary structure, part of the 50S ribosomal subunit.

In terms of biological role, this protein binds specifically to 23S rRNA; its binding is stimulated by other ribosomal proteins, e.g. L4, L17, and L20. It is important during the early stages of 50S assembly. It makes multiple contacts with different domains of the 23S rRNA in the assembled 50S subunit and ribosome. Its function is as follows. The globular domain of the protein is located near the polypeptide exit tunnel on the outside of the subunit, while an extended beta-hairpin is found that lines the wall of the exit tunnel in the center of the 70S ribosome. This chain is Large ribosomal subunit protein uL22, found in Azoarcus sp. (strain BH72).